We begin with the raw amino-acid sequence, 537 residues long: Exoglucanase 1 (537 aa).

The signal sequence occupies residues M1–A18. The interval L19 to G453 is catalytic. N136 is a glycosylation site (N-linked (GlcNAc...) asparagine). Catalysis depends on E235, which acts as the Nucleophile. E240 functions as the Proton donor in the catalytic mechanism. Residues N414 and N456 are each glycosylated (N-linked (GlcNAc...) asparagine). The segment at P454–T477 is linker. Low complexity predominate over residues T458–G502. The interval T458 to A503 is disordered. The CBM1 domain occupies T501–L537. 2 disulfides stabilise this stretch: C509–C526 and C520–C536.

It belongs to the glycosyl hydrolase 7 (cellulase C) family.

Its subcellular location is the secreted. The catalysed reaction is Hydrolysis of (1-&gt;4)-beta-D-glucosidic linkages in cellulose and cellotetraose, releasing cellobiose from the non-reducing ends of the chains.. The sequence is that of Exoglucanase 1 (cbh1) from Penicillium janthinellum (Penicillium vitale).